The sequence spans 253 residues: Transcription factor bHLH106 (253 aa).

In terms of domain architecture, bHLH spans 66-115 (AALRNHKEAERRRRERINSHLNKLRNVLSCNSKTDKATLLAKVVQRVREL).

As to quaternary structure, homodimer.

The protein localises to the nucleus. The chain is Transcription factor bHLH106 (BHLH106) from Arabidopsis thaliana (Mouse-ear cress).